A 435-amino-acid chain; its full sequence is Glutamyl-tRNA reductase (435 aa).

Substrate contacts are provided by residues 49-52, serine 109, 114-116, and glutamine 120; these read TCNR and ETQ. Residue cysteine 50 is the Nucleophile of the active site. 189 to 194 lines the NADP(+) pocket; that stretch reads GAGEMS.

This sequence belongs to the glutamyl-tRNA reductase family. In terms of assembly, homodimer.

It carries out the reaction (S)-4-amino-5-oxopentanoate + tRNA(Glu) + NADP(+) = L-glutamyl-tRNA(Glu) + NADPH + H(+). Its pathway is porphyrin-containing compound metabolism; protoporphyrin-IX biosynthesis; 5-aminolevulinate from L-glutamyl-tRNA(Glu): step 1/2. Functionally, catalyzes the NADPH-dependent reduction of glutamyl-tRNA(Glu) to glutamate 1-semialdehyde (GSA). The sequence is that of Glutamyl-tRNA reductase from Listeria monocytogenes serovar 1/2a (strain ATCC BAA-679 / EGD-e).